Reading from the N-terminus, the 111-residue chain is Large ribosomal subunit protein eL31 (111 aa).

The protein belongs to the eukaryotic ribosomal protein eL31 family.

In Tetrahymena thermophila (strain SB210), this protein is Large ribosomal subunit protein eL31 (RPL31).